A 62-amino-acid polypeptide reads, in one-letter code: Small, acid-soluble spore protein A (62 aa).

Belongs to the alpha/beta-type SASP family.

Its function is as follows. SASP are bound to spore DNA. They are double-stranded DNA-binding proteins that cause DNA to change to an a-like conformation. They protect the DNA backbone from chemical and enzymatic cleavage and are thus involved in dormant spore's high resistance to UV light. The protein is Small, acid-soluble spore protein A (sasP-A) of Priestia megaterium (Bacillus megaterium).